Consider the following 175-residue polypeptide: Co-chaperone protein HscB homolog (175 aa).

Residues 7–79 form the J domain; sequence SHFALFNLPE…LKRARYLLSL (73 aa).

It belongs to the HscB family. In terms of assembly, interacts with HscA and stimulates its ATPase activity.

Its function is as follows. Co-chaperone involved in the maturation of iron-sulfur cluster-containing proteins. Seems to help targeting proteins to be folded toward HscA. The polypeptide is Co-chaperone protein HscB homolog (Paraburkholderia phymatum (strain DSM 17167 / CIP 108236 / LMG 21445 / STM815) (Burkholderia phymatum)).